A 201-amino-acid chain; its full sequence is Ras-related protein Rab-1B (201 aa).

Position 1 is an N-acetylmethionine (Met-1). GTP contacts are provided by Ser-17, Gly-18, Val-19, Gly-20, Lys-21, Ser-22, Cys-23, Tyr-33, Thr-34, Glu-35, Ser-36, Ser-39, and Thr-40. Ser-22 is a binding site for Mg(2+). A Switch 1 motif is present at residues 30–45 (DDTYTESYISTIGVDF). Mg(2+) is bound by residues Thr-40 and Asp-63. The tract at residues 64–83 (TAGQERFRTITSSYYRGAHG) is switch 2 region; required for interaction with REP1/CHM. Positions 65–80 (AGQERFRTITSSYYRG) match the Switch 2 motif. GTP contacts are provided by Gly-66, Asn-121, Lys-122, Asp-124, Ser-151, Ala-152, and Lys-153. The interval 174 to 201 (GPGAASGGERPNLKIDSTPVKPAGGGCC) is disordered. Residues Cys-200 and Cys-201 are each lipidated (S-geranylgeranyl cysteine). A Cysteine methyl ester modification is found at Cys-201.

The protein belongs to the small GTPase superfamily. Rab family. As to quaternary structure, interacts with MICAL1 and MICAL2. Interacts (in GTP-bound form) with MICALCL, MICAL1 and MILCAL3. Interacts with GDI1; the interaction requires the GDP-bound state. Interacts with CHM/REP1; the interaction requires the GDP-bound form and is necessary for prenylation by GGTase II. Interacts with RabGAP TBC1D20. Interacts (in GDP-bound form) with lipid phosphatase MTMR6 (via GRAM domain); the interaction regulates MTMR6 recruitment to the endoplasmic reticulum-Golgi intermediate compartment. Interacts (in GDP-bound form) with lipid phosphatase MTMR7. The cofactor is Mg(2+). In terms of processing, prenylated; by GGTase II, only after interaction of the substrate with Rab escort protein 1 (REP1).

Its subcellular location is the cytoplasm. The protein localises to the membrane. The protein resides in the preautophagosomal structure membrane. It is found in the perinuclear region. It catalyses the reaction GTP + H2O = GDP + phosphate + H(+). Its activity is regulated as follows. Regulated by guanine nucleotide exchange factors (GEFs) which promote the exchange of bound GDP for free GTP. Regulated by GTPase activating proteins (GAPs) including TBC1D20 which increases the GTP hydrolysis activity. Inhibited by GDP dissociation inhibitors (GDIs). In terms of biological role, the small GTPases Rab are key regulators of intracellular membrane trafficking, from the formation of transport vesicles to their fusion with membranes. Rabs cycle between an inactive GDP-bound form and an active GTP-bound form that is able to recruit to membranes different set of downstream effectors directly responsible for vesicle formation, movement, tethering and fusion. Plays a role in the initial events of the autophagic vacuole development which take place at specialized regions of the endoplasmic reticulum. Regulates vesicular transport between the endoplasmic reticulum and successive Golgi compartments. Required to modulate the compacted morphology of the Golgi. Promotes the recruitment of lipid phosphatase MTMR6 to the endoplasmic reticulum-Golgi intermediate compartment. The sequence is that of Ras-related protein Rab-1B (RAB1B) from Macaca fascicularis (Crab-eating macaque).